The primary structure comprises 138 residues: Acidic phospholipase A2 PePLA2 (138 aa).

A signal peptide spans 1-16 (MRTLWIMAVLLLGVEG). Intrachain disulfides connect cysteine 42-cysteine 131, cysteine 44-cysteine 60, cysteine 59-cysteine 110, cysteine 65-cysteine 138, cysteine 66-cysteine 103, cysteine 73-cysteine 97, and cysteine 91-cysteine 101. Positions 43, 45, and 47 each coordinate Ca(2+). Histidine 63 is a catalytic residue. Aspartate 64 is a binding site for Ca(2+). Aspartate 104 is an active-site residue.

Belongs to the phospholipase A2 family. Group II subfamily. D49 sub-subfamily. Ca(2+) is required as a cofactor. As to expression, expressed by the venom gland.

The protein resides in the secreted. It catalyses the reaction a 1,2-diacyl-sn-glycero-3-phosphocholine + H2O = a 1-acyl-sn-glycero-3-phosphocholine + a fatty acid + H(+). PLA2 catalyzes the calcium-dependent hydrolysis of the 2-acyl groups in 3-sn-phosphoglycerides. This is Acidic phospholipase A2 PePLA2 from Protobothrops elegans (Elegant pitviper).